Consider the following 197-residue polypeptide: Suppressor of RNA silencing p3 (197 aa).

This sequence belongs to the tenuiviruses p3 protein family. In terms of assembly, homodimer.

Its subcellular location is the host cytoplasm. Acts as a suppressor of RNA-mediated gene silencing, also known as post-transcriptional gene silencing (PTGS), presumably through the binding of dsRNA. This Rottboellia (Sorghum) protein is Suppressor of RNA silencing p3.